Consider the following 679-residue polypeptide: Protein hook (679 aa).

Residues Met-1 to Glu-155 form an interaction with microtubules region. Residues Asn-6–Ala-123 enclose the Calponin-homology (CH) domain. Coiled-coil stretches lie at residues Glu-135–Gly-437 and Gln-480–Leu-574.

The protein belongs to the hook family. In terms of assembly, homodimer. Interacts with microtubules via its N-terminus.

It localises to the cytoplasm. It is found in the cytoskeleton. Its subcellular location is the endosome. The protein localises to the synapse. Involved in endocytic trafficking by stabilizing organelles of the endocytic pathway. Probably acts as a cytoskeletal linker protein required to tether endosome vesicles to the cytoskeleton. Involved in modulation of endocytosis at stages required for down-regulation of membrane proteins that control synapse size. Not involved in synaptic vesicle recycling. Required in R7 cells for boss endocytosis into multivesicular bodies (MVBs). Has a role in regulating adult longevity. In Drosophila melanogaster (Fruit fly), this protein is Protein hook.